The sequence spans 270 residues: uncharacterized protein (270 aa).

The N-terminal stretch at 1 to 22 (MEYIKKIALYMSVLLLIIFIGG) is a signal peptide. A lipid anchor (N-palmitoyl cysteine) is attached at cysteine 23. A lipid anchor (S-diacylglycerol cysteine) is attached at cysteine 23.

Belongs to the staphylococcal tandem lipoprotein family.

The protein resides in the cell membrane. This is an uncharacterized protein from Staphylococcus aureus (strain MW2).